The following is a 208-amino-acid chain: Large ribosomal subunit protein uL3 (208 aa).

The tract at residues 116 to 148 is disordered; the sequence is GFQGVIKRHGQSRGPMAHGSRYHRRPGSMGPVA.

The protein belongs to the universal ribosomal protein uL3 family. In terms of assembly, part of the 50S ribosomal subunit. Forms a cluster with proteins L14 and L19.

Functionally, one of the primary rRNA binding proteins, it binds directly near the 3'-end of the 23S rRNA, where it nucleates assembly of the 50S subunit. The protein is Large ribosomal subunit protein uL3 of Streptococcus pneumoniae (strain Hungary19A-6).